The sequence spans 368 residues: tRNA-specific 2-thiouridylase MnmA (368 aa).

Residues 12-19 (AMSGGVDS) and Met38 contribute to the ATP site. Cys110 serves as the catalytic Nucleophile. Cys110 and Cys207 are disulfide-bonded. Gly134 lines the ATP pocket. The interaction with tRNA stretch occupies residues 157-159 (KDQ). The active-site Cysteine persulfide intermediate is the Cys207. The segment at 312 to 313 (RY) is interaction with tRNA.

The protein belongs to the MnmA/TRMU family.

The protein localises to the cytoplasm. The catalysed reaction is S-sulfanyl-L-cysteinyl-[protein] + uridine(34) in tRNA + AH2 + ATP = 2-thiouridine(34) in tRNA + L-cysteinyl-[protein] + A + AMP + diphosphate + H(+). In terms of biological role, catalyzes the 2-thiolation of uridine at the wobble position (U34) of tRNA, leading to the formation of s(2)U34. In Geobacter metallireducens (strain ATCC 53774 / DSM 7210 / GS-15), this protein is tRNA-specific 2-thiouridylase MnmA.